A 256-amino-acid chain; its full sequence is Ubiquinone/menaquinone biosynthesis C-methyltransferase UbiE (256 aa).

Over residues 1–12 (MNDQRKGDHAEP) the composition is skewed to basic and acidic residues. Residues 1–23 (MNDQRKGDHAEPTTHFGYQDVPE) are disordered. S-adenosyl-L-methionine is bound by residues T79, D100, and 128-129 (DA).

It belongs to the class I-like SAM-binding methyltransferase superfamily. MenG/UbiE family.

The catalysed reaction is a 2-demethylmenaquinol + S-adenosyl-L-methionine = a menaquinol + S-adenosyl-L-homocysteine + H(+). It carries out the reaction a 2-methoxy-6-(all-trans-polyprenyl)benzene-1,4-diol + S-adenosyl-L-methionine = a 5-methoxy-2-methyl-3-(all-trans-polyprenyl)benzene-1,4-diol + S-adenosyl-L-homocysteine + H(+). The protein operates within quinol/quinone metabolism; menaquinone biosynthesis; menaquinol from 1,4-dihydroxy-2-naphthoate: step 2/2. It participates in cofactor biosynthesis; ubiquinone biosynthesis. Its function is as follows. Methyltransferase required for the conversion of demethylmenaquinol (DMKH2) to menaquinol (MKH2) and the conversion of 2-polyprenyl-6-methoxy-1,4-benzoquinol (DDMQH2) to 2-polyprenyl-3-methyl-6-methoxy-1,4-benzoquinol (DMQH2). The chain is Ubiquinone/menaquinone biosynthesis C-methyltransferase UbiE from Pseudomonas putida (strain GB-1).